The following is a 312-amino-acid chain: Malate dehydrogenase (312 aa).

NAD(+)-binding positions include 7 to 13 and D34; that span reads GAAGGIG. R81 and R87 together coordinate substrate. Residues N94 and 117–119 each bind NAD(+); that span reads ITN. 2 residues coordinate substrate: N119 and R153. Residue H177 is the Proton acceptor of the active site. NAD(+) is bound at residue M227.

It belongs to the LDH/MDH superfamily. MDH type 1 family. As to quaternary structure, homodimer.

It catalyses the reaction (S)-malate + NAD(+) = oxaloacetate + NADH + H(+). In terms of biological role, catalyzes the reversible oxidation of malate to oxaloacetate. In Cronobacter sakazakii (strain ATCC BAA-894) (Enterobacter sakazakii), this protein is Malate dehydrogenase.